We begin with the raw amino-acid sequence, 454 residues long: UDP-N-acetylmuramoyl-tripeptide--D-alanyl-D-alanine ligase (454 aa).

116–122 (GSVGKTT) is a binding site for ATP.

This sequence belongs to the MurCDEF family. MurF subfamily.

The protein localises to the cytoplasm. The catalysed reaction is D-alanyl-D-alanine + UDP-N-acetyl-alpha-D-muramoyl-L-alanyl-gamma-D-glutamyl-meso-2,6-diaminopimelate + ATP = UDP-N-acetyl-alpha-D-muramoyl-L-alanyl-gamma-D-glutamyl-meso-2,6-diaminopimeloyl-D-alanyl-D-alanine + ADP + phosphate + H(+). It participates in cell wall biogenesis; peptidoglycan biosynthesis. Its function is as follows. Involved in cell wall formation. Catalyzes the final step in the synthesis of UDP-N-acetylmuramoyl-pentapeptide, the precursor of murein. This chain is UDP-N-acetylmuramoyl-tripeptide--D-alanyl-D-alanine ligase, found in Synechocystis sp. (strain ATCC 27184 / PCC 6803 / Kazusa).